Consider the following 234-residue polypeptide: Venom allergen 3 (234 aa).

Positions 1–22 (MELIVSILWLAITAENLANTLA) are cleaved as a signal peptide. Intrachain disulfides connect C26-C41, C31-C125, C52-C118, and C198-C216. The region spanning 69 to 218 (VNKHNELRQR…WTKHYLVCNY (150 aa)) is the SCP domain. The segment at 80–99 (ASGKEMRGTNGPQPPAVKMP) is disordered.

Belongs to the CRISP family. In terms of tissue distribution, expressed by the venom gland.

It is found in the secreted. This is Venom allergen 3 from Solenopsis invicta (Red imported fire ant).